Reading from the N-terminus, the 194-residue chain is Molybdenum cofactor guanylyltransferase (194 aa).

GTP contacts are provided by residues 12 to 14, lysine 25, asparagine 53, aspartate 70, and aspartate 100; that span reads LAG. Aspartate 100 is a binding site for Mg(2+).

Belongs to the MobA family. As to quaternary structure, monomer. It depends on Mg(2+) as a cofactor.

It localises to the cytoplasm. The catalysed reaction is Mo-molybdopterin + GTP + H(+) = Mo-molybdopterin guanine dinucleotide + diphosphate. Functionally, transfers a GMP moiety from GTP to Mo-molybdopterin (Mo-MPT) cofactor (Moco or molybdenum cofactor) to form Mo-molybdopterin guanine dinucleotide (Mo-MGD) cofactor. The chain is Molybdenum cofactor guanylyltransferase from Aliivibrio salmonicida (strain LFI1238) (Vibrio salmonicida (strain LFI1238)).